The chain runs to 203 residues: E3 ubiquitin-protein ligase RNF152 (203 aa).

The RING-type zinc-finger motif lies at Cys-12–Arg-55. A helical transmembrane segment spans residues Ser-167–Leu-187.

It belongs to the RNF152 family.

The protein localises to the lysosome membrane. The enzyme catalyses S-ubiquitinyl-[E2 ubiquitin-conjugating enzyme]-L-cysteine + [acceptor protein]-L-lysine = [E2 ubiquitin-conjugating enzyme]-L-cysteine + N(6)-ubiquitinyl-[acceptor protein]-L-lysine.. It functions in the pathway protein modification; protein ubiquitination. Functionally, E3 ubiquitin-protein ligase that acts as a negative regulator of mTORC1 signaling by mediating ubiquitination of RagA/RRAGA and RHEB. Catalyzes 'Lys-63'-linked polyubiquitination of RagA/RRAGA in response to amino acid starvation, thereby regulating mTORC1 signaling. Also mediates monoubiquitination of RHEB, promoting its association with the TSC-TBC complex and subsequent inhibition. Also mediates 'Lys-48'-linked polyubiquitination of target proteins and their subsequent targeting to the proteasome for degradation. The chain is E3 ubiquitin-protein ligase RNF152 from Gallus gallus (Chicken).